The chain runs to 406 residues: 26S proteasome regulatory subunit 8 (406 aa).

Ala2 carries the post-translational modification N-acetylalanine. The residue at position 120 (Ser120) is a Phosphoserine. Positions 186–406 (VLLYGPPGTG…KNMSIKKLWK (221 aa)) are may mediate interaction with PRPF9. 190 to 197 (GPPGTGKT) contacts ATP. Lys222 carries the N6-acetyllysine modification.

This sequence belongs to the AAA ATPase family. As to quaternary structure, component of the 19S proteasome regulatory particle complex. The 26S proteasome consists of a 20S core particle (CP) and two 19S regulatory subunits (RP). The regulatory particle is made of a lid composed of 9 subunits, a base containing 6 ATPases including PSMC5 and few additional components. Component of a complex with USP49 and RUVBL1. Interacts with PRPF19. Interacts with TRIM5. Interacts with NDC80. Interacts with PAAF1. Interacts, in vitro, with the thyroid hormone receptor (in a thyroid hormone T3-dependent manner) and with retinoid X receptor (RXR). Interacts with ERCC6.

It localises to the cytoplasm. The protein resides in the nucleus. In terms of biological role, component of the 26S proteasome, a multiprotein complex involved in the ATP-dependent degradation of ubiquitinated proteins. This complex plays a key role in the maintenance of protein homeostasis by removing misfolded or damaged proteins, which could impair cellular functions, and by removing proteins whose functions are no longer required. Therefore, the proteasome participates in numerous cellular processes, including cell cycle progression, apoptosis, or DNA damage repair. PSMC5 belongs to the heterohexameric ring of AAA (ATPases associated with diverse cellular activities) proteins that unfolds ubiquitinated target proteins that are concurrently translocated into a proteolytic chamber and degraded into peptides. The chain is 26S proteasome regulatory subunit 8 (PSMC5) from Bos taurus (Bovine).